Consider the following 436-residue polypeptide: Trigger factor (436 aa).

A PPIase FKBP-type domain is found at 161-246; it reads GDQLNIDFVG…VNSVSEAELP (86 aa).

The protein belongs to the FKBP-type PPIase family. Tig subfamily.

It localises to the cytoplasm. It catalyses the reaction [protein]-peptidylproline (omega=180) = [protein]-peptidylproline (omega=0). In terms of biological role, involved in protein export. Acts as a chaperone by maintaining the newly synthesized protein in an open conformation. Functions as a peptidyl-prolyl cis-trans isomerase. This is Trigger factor from Azotobacter vinelandii (strain DJ / ATCC BAA-1303).